Reading from the N-terminus, the 431-residue chain is MANSC domain-containing protein 1 (431 aa).

An N-terminal signal peptide occupies residues 1–26 (MFFGGEGSLTYTLVIICFLTLRLSAS). Topologically, residues 27–385 (QNCLKKSLED…QYGLPFEKWL (359 aa)) are extracellular. The MANSC domain occupies 33 to 117 (SLEDVVIDIQ…LKPAKGLMSY (85 aa)). N-linked (GlcNAc...) asparagine glycans are attached at residues asparagine 72, asparagine 222, and asparagine 251. A disordered region spans residues 234–277 (SPHTTSATPKPATLLPTNASVTPSGTSQPQLATTAPPVTTVTSQ). The span at 248–261 (LPTNASVTPSGTSQ) shows a compositional bias: polar residues. Residues 262–277 (PQLATTAPPVTTVTSQ) are compositionally biased toward low complexity. N-linked (GlcNAc...) asparagine glycans are attached at residues asparagine 327 and asparagine 352. Residues 352-372 (NKTASWEGREASPGSSSQGSV) form a disordered region. A helical transmembrane segment spans residues 386–408 (LIGSLLFGVLFLVIGLVLLGRIL). Residues 409–431 (SESLRRKRYSRLDYLINGIYVDI) lie on the Cytoplasmic side of the membrane.

Widely expressed.

Its subcellular location is the membrane. The sequence is that of MANSC domain-containing protein 1 (MANSC1) from Homo sapiens (Human).